A 235-amino-acid chain; its full sequence is NADH-quinone oxidoreductase subunit C (235 aa).

Belongs to the complex I 30 kDa subunit family. In terms of assembly, NDH-1 is composed of 14 different subunits. Subunits NuoB, C, D, E, F, and G constitute the peripheral sector of the complex.

Its subcellular location is the cell membrane. The catalysed reaction is a quinone + NADH + 5 H(+)(in) = a quinol + NAD(+) + 4 H(+)(out). NDH-1 shuttles electrons from NADH, via FMN and iron-sulfur (Fe-S) centers, to quinones in the respiratory chain. The immediate electron acceptor for the enzyme in this species is believed to be a menaquinone. Couples the redox reaction to proton translocation (for every two electrons transferred, four hydrogen ions are translocated across the cytoplasmic membrane), and thus conserves the redox energy in a proton gradient. This Mycolicibacterium paratuberculosis (strain ATCC BAA-968 / K-10) (Mycobacterium paratuberculosis) protein is NADH-quinone oxidoreductase subunit C.